A 576-amino-acid chain; its full sequence is Proline--tRNA ligase (576 aa).

This sequence belongs to the class-II aminoacyl-tRNA synthetase family. ProS type 1 subfamily. As to quaternary structure, homodimer.

The protein resides in the cytoplasm. The enzyme catalyses tRNA(Pro) + L-proline + ATP = L-prolyl-tRNA(Pro) + AMP + diphosphate. In terms of biological role, catalyzes the attachment of proline to tRNA(Pro) in a two-step reaction: proline is first activated by ATP to form Pro-AMP and then transferred to the acceptor end of tRNA(Pro). As ProRS can inadvertently accommodate and process non-cognate amino acids such as alanine and cysteine, to avoid such errors it has two additional distinct editing activities against alanine. One activity is designated as 'pretransfer' editing and involves the tRNA(Pro)-independent hydrolysis of activated Ala-AMP. The other activity is designated 'posttransfer' editing and involves deacylation of mischarged Ala-tRNA(Pro). The misacylated Cys-tRNA(Pro) is not edited by ProRS. In Bordetella petrii (strain ATCC BAA-461 / DSM 12804 / CCUG 43448), this protein is Proline--tRNA ligase.